We begin with the raw amino-acid sequence, 347 residues long: Protein RecA (347 aa).

66–73 contacts ATP; that stretch reads GPESSGKT.

It belongs to the RecA family.

It is found in the cytoplasm. In terms of biological role, can catalyze the hydrolysis of ATP in the presence of single-stranded DNA, the ATP-dependent uptake of single-stranded DNA by duplex DNA, and the ATP-dependent hybridization of homologous single-stranded DNAs. It interacts with LexA causing its activation and leading to its autocatalytic cleavage. In Burkholderia cepacia (Pseudomonas cepacia), this protein is Protein RecA.